The chain runs to 317 residues: MREVLVVSESVELAEEYYLSFNKFSSGSTSLLGQVTKASFFSSLASSGTKSLNTKSFGLKSLSLKSLNTKSSGLKSLNTKSSGLKSLGLKNEFDYLTFEQVKSSGLEDERYELILVVCDDTDDFYGEKGLANLTLFHNSLLPNGKFVLAVPLNSPHEEEMRKELMYSGLVDVASCAYYLTKFITGVRPNWKAKGDRKSSSIHAAPIDGYISKAPDYESCSTKPRACANCTCGRAERENLNSTDSNANSTDFNANSTDFNGVDLTTNSKDVSGVDLVVDVDAPTSSCGNCYLGDAFRCDSCPYKGLPAFKPGEKVLLE.

The N-terminal SAM-like domain stretch occupies residues 1 to 192 (MREVLVVSES…ITGVRPNWKA (192 aa)). A linker region spans residues 193 to 216 (KGDRKSSSIHAAPIDGYISKAPDY). C219, C226, C229, and C231 together coordinate [2Fe-2S] cluster. The interval 219-231 (CSTKPRACANCTC) is fe-S binding site A. 4 residues coordinate [4Fe-4S] cluster: C286, C289, C297, and C300. 2 consecutive short sequence motifs (cx2C motif) follow at residues 286–289 (CGNC) and 297–300 (CDSC). The fe-S binding site B stretch occupies residues 286–300 (CGNCYLGDAFRCDSC).

This sequence belongs to the anamorsin family. Monomer. Requires [2Fe-2S] cluster as cofactor. [4Fe-4S] cluster serves as cofactor.

Its subcellular location is the cytoplasm. The protein localises to the mitochondrion intermembrane space. Component of the cytosolic iron-sulfur (Fe-S) protein assembly (CIA) machinery. Required for the maturation of extramitochondrial Fe-S proteins. Part of an electron transfer chain functioning in an early step of cytosolic Fe-S biogenesis, facilitating the de novo assembly of a [4Fe-4S] cluster on the cytosolic Fe-S scaffold complex. Electrons are transferred from NADPH via a FAD- and FMN-containing diflavin oxidoreductase. Together with the diflavin oxidoreductase, also required for the assembly of the diferric tyrosyl radical cofactor of ribonucleotide reductase (RNR), probably by providing electrons for reduction during radical cofactor maturation in the catalytic small subunit. This Theileria parva (East coast fever infection agent) protein is Anamorsin homolog.